A 244-amino-acid chain; its full sequence is DNA polymerase sliding clamp (244 aa).

This sequence belongs to the PCNA family. Homotrimer. The subunits circularize to form a toroid; DNA passes through its center. Replication factor C (RFC) is required to load the toroid on the DNA.

Its function is as follows. Sliding clamp subunit that acts as a moving platform for DNA processing. Responsible for tethering the catalytic subunit of DNA polymerase and other proteins to DNA during high-speed replication. In Methanothrix thermoacetophila (strain DSM 6194 / JCM 14653 / NBRC 101360 / PT) (Methanosaeta thermophila), this protein is DNA polymerase sliding clamp.